We begin with the raw amino-acid sequence, 55 residues long: Large ribosomal subunit protein bL33 (55 aa).

The protein belongs to the bacterial ribosomal protein bL33 family.

The sequence is that of Large ribosomal subunit protein bL33 from Novosphingobium aromaticivorans (strain ATCC 700278 / DSM 12444 / CCUG 56034 / CIP 105152 / NBRC 16084 / F199).